Consider the following 255-residue polypeptide: Putative gene 39 protein (255 aa).

The sequence is that of Putative gene 39 protein (39) from Bacillus phage SP01 (Bacteriophage SP01).